Reading from the N-terminus, the 879-residue chain is Alanine--tRNA ligase (879 aa).

Positions 566, 570, 668, and 672 each coordinate Zn(2+).

Belongs to the class-II aminoacyl-tRNA synthetase family. The cofactor is Zn(2+).

It is found in the cytoplasm. The catalysed reaction is tRNA(Ala) + L-alanine + ATP = L-alanyl-tRNA(Ala) + AMP + diphosphate. Its function is as follows. Catalyzes the attachment of alanine to tRNA(Ala) in a two-step reaction: alanine is first activated by ATP to form Ala-AMP and then transferred to the acceptor end of tRNA(Ala). Also edits incorrectly charged Ser-tRNA(Ala) and Gly-tRNA(Ala) via its editing domain. In Oceanobacillus iheyensis (strain DSM 14371 / CIP 107618 / JCM 11309 / KCTC 3954 / HTE831), this protein is Alanine--tRNA ligase.